Reading from the N-terminus, the 545-residue chain is Chaperonin GroEL (545 aa).

Residues 29–32 (TMGP), Lys-50, 86–90 (DGTTT), Gly-414, 477–479 (NAA), and Asp-493 contribute to the ATP site.

Belongs to the chaperonin (HSP60) family. In terms of assembly, forms a cylinder of 14 subunits composed of two heptameric rings stacked back-to-back. Interacts with the co-chaperonin GroES.

The protein resides in the cytoplasm. It carries out the reaction ATP + H2O + a folded polypeptide = ADP + phosphate + an unfolded polypeptide.. Together with its co-chaperonin GroES, plays an essential role in assisting protein folding. The GroEL-GroES system forms a nano-cage that allows encapsulation of the non-native substrate proteins and provides a physical environment optimized to promote and accelerate protein folding. In Campylobacter fetus subsp. fetus (strain 82-40), this protein is Chaperonin GroEL.